A 541-amino-acid chain; its full sequence is MPGINGAGPSNFFWQWRTDGEPVTEREHDSSRSASSANSPELPPPASPAESGRQRLLRSSALSRQTREWLEATPARVQGANPPAEARQSPEAQQAERIVQELVRGGADLNNVRTMLRNVMDNNAVAFSRVERDILLQHFPNMPMTGISSDSVLANELRQRLRQTVRQQRALVQSSTPARLADSSSGSSQRSLIGRSTMLMTPGRSSSSSAAASRTSVDRHPQGLDLESARLASAARHNHSANQTNEALRRLTQEGVDMERLRTSLGRYIMSLEPLPPDLRRALESVGINPFIPEELSLVDHPVLNFSAALNRMLASRQTTTNSPELPPLASSAESGRRRLLRSPPLLSGQREWIEQNMRQGAEPQSSRLNRAVRLAVMPPQKENEDNVAYAIRLRRLNPGADVSRVVASFITDPAARQQVVDDIRAALDIAPQFSQLRTISKADAESEELGFRDAADHPDNATSCLFGEELSLSNPDQQVIGLAVNPTDKPQPYSQEVNKALTFMDMKKLAQYLADKPEHPLNRQRLDAKNISKYAFKIVP.

Disordered stretches follow at residues 1 to 94, 168 to 222, and 317 to 338; these read MPGI…EAQQ, QRAL…RHPQ, and RQTT…SGRR. The segment covering 18–31 has biased composition (basic and acidic residues); the sequence is TDGEPVTEREHDSS. A compositionally biased stretch (low complexity) spans 183 to 196; the sequence is SSSGSSQRSLIGRS.

The protein belongs to the HopAB family.

It is found in the secreted. Functionally, effector protein that plays different roles depending on the species and plant cultivars that interact with the pathogen. Acts as a virulence determinant by enhancing the development of disease symptoms and bacterial growth. Acts as an avirulence factor by eliciting hypersensitive response (HR) and plant resistance. The protein is Effector protein hopAB1 (hopAB1) of Pseudomonas savastanoi (Pseudomonas syringae pv. savastanoi).